Consider the following 123-residue polypeptide: Putative iron-sulfur cluster insertion protein ErpA (123 aa).

The iron-sulfur cluster site is built by Cys-51, Cys-115, and Cys-117.

Belongs to the HesB/IscA family. In terms of assembly, homodimer. Requires iron-sulfur cluster as cofactor.

Required for insertion of 4Fe-4S clusters. The protein is Putative iron-sulfur cluster insertion protein ErpA of Burkholderia multivorans (strain ATCC 17616 / 249).